A 781-amino-acid chain; its full sequence is Homeobox protein SIX4 (781 aa).

The segment covering 1–10 has biased composition (polar residues); it reads MSSSSPTGQI. 2 disordered regions span residues 1–55 and 270–321; these read MSSS…PLEP and WFKN…GITN. Position 2 is an N-acetylserine (serine 2). A DNA-binding region (homeobox) is located at residues 223–282; the sequence is GEETVYCFKEKSRNALKELYKQNRYPSPAEKRHLAKITGLSLTQVSNWFKNRRQRDRNPS. Composition is skewed to basic and acidic residues over residues 278–290 and 299–308; these read DRNP…KSES and ESSKGHEDLS. At serine 640 the chain carries Phosphoserine.

This sequence belongs to the SIX/Sine oculis homeobox family. Interacts with EYA3; acts cooperatively with EYA3 to transactivate target genes through interaction and nuclear translocation of EYA3 protein.

The protein resides in the nucleus. Its subcellular location is the cytoplasm. Its function is as follows. Transcriptional regulator which can act as both a transcriptional repressor and activator by binding a DNA sequence on these target genes and is involved in processes like cell differentiation, cell migration and cell survival. Transactivates gene expression by binding a 5'-[CAT]A[CT][CT][CTG]GA[GAT]-3' motif present in the Trex site and a 5'-TCA[AG][AG]TTNC-3' motif present in the MEF3 site of the muscle-specific genes enhancer. Acts cooperatively with EYA proteins to transactivate their target genes through interaction and nuclear translocation of EYA protein. Acts synergistically with SIX1 to regulate target genes involved in formation of various organs, including muscle, kidney, gonad, ganglia, olfactory epithelium and cranial skeleton. Plays a role in several important steps of muscle development. Controls the genesis of hypaxial myogenic progenitors in the dermomyotome by transactivating PAX3 and the delamination and migration of the hypaxial precursors from the ventral lip to the limb buds through the transactivation of PAX3, MET and LBX1. Controls myoblast determination by transactivating MYF5, MYOD1 and MYF6. Controls somitic differentiation in myocyte through MYOG transactivation. Plays a role in synaptogenesis and sarcomere organization by participating in myofiber specialization during embryogenesis by activating fast muscle program in the primary myotome resulting in an up-regulation of fast muscle genes, including ATP2A1, MYL1 and TNNT3. Simultaneously, is also able to activate inhibitors of slow muscle genes, such as SOX6, HRASLS, and HDAC4, thereby restricting the activation of the slow muscle genes. During muscle regeneration, negatively regulates differentiation of muscle satellite cells through down-regulation of MYOG expression. During kidney development regulates the early stages of metanephros development and ureteric bud formation through regulation of GDNF, SALL1, PAX8 and PAX2 expression. Plays a role in gonad development by regulating both testis determination and size determination. In gonadal sex determination, transactivates ZFPM2 by binding a MEF3 consensus sequence, resulting in SRY up-regulation. In gonadal size determination, transactivates NR5A1 by binding a MEF3 consensus sequence resulting in gonadal precursor cell formation regulation. During olfactory development mediates the specification and patterning of olfactory placode through fibroblast growth factor and BMP4 signaling pathways and also regulates epithelial cell proliferation during placode formation. Promotes survival of sensory neurons during early trigeminal gangliogenesis. In the developing dorsal root ganglia, up-regulates SLC12A2 transcription. Regulates early thymus/parathyroid organogenesis through regulation of GCM2 and FOXN1 expression. Forms gustatory papillae during development of the tongue. Also plays a role during embryonic cranial skeleton morphogenesis. The sequence is that of Homeobox protein SIX4 (SIX4) from Homo sapiens (Human).